Here is a 76-residue protein sequence, read N- to C-terminus: Conotoxin Gla(1)-TxVI (76 aa).

Residues 1–19 (MEKLTILLLVAAVLMSTQA) form the signal peptide. A propeptide spanning residues 20 to 45 (LVERAGENHSKENINFLLKRKRAADR) is cleaved from the precursor. Trp48 carries the 6'-bromotryptophan modification. Glu50 carries the post-translational modification 4-carboxyglutamate. Intrachain disulfides connect Cys51-Cys65, Cys58-Cys69, and Cys64-Cys73. Pro61 carries the post-translational modification 4-hydroxyproline. 3 positions are modified to 4-carboxyglutamate: Glu63, Glu67, and Glu70. 6'-bromotryptophan is present on Trp76.

In terms of tissue distribution, expressed by the venom duct.

The protein localises to the secreted. In Conus textile (Cloth-of-gold cone), this protein is Conotoxin Gla(1)-TxVI.